The following is a 292-amino-acid chain: MNNYTIKDITRASGGFAMLAVDQREAMRLMFAAAGAKTPVADSVLTDFKVNAAKILSPYASAVLLDQQFCYRQAVEQNAVAKSCAMIVAADDFIPGNGIPVDNVVLDKKINAQAVKRDGAKALKLLVLWRSDEDAQQRLNMVKEFNELCHSNGLLSIIEPVVRPPRCGDKFDREQAIIDAAKELGDSGADLYKVEMPLYGKGARSDLLTASQRLNGHINMPWVILSSGVDEKLFPRAVRVAMEAGASGFLAGRAVWSSVIGLPDTELMLRDVSAPKLQRLGEIVDEMMAKRR.

The Schiff-base intermediate with substrate role is filled by Lys-193.

This sequence belongs to the aldolase LacD family. In terms of assembly, homotetramer.

The enzyme catalyses 6-deoxy-6-sulfo-D-fructose 1-phosphate = (2S)-3-sulfolactaldehyde + dihydroxyacetone phosphate. Functionally, cleaves 6-deoxy-6-sulfo-D-fructose 1-phosphate (SFP) to form dihydroxyacetone phosphate (DHAP) and 3-sulfolactaldehyde (SLA). Can also catalyze the reverse reaction. This chain is Sulfofructosephosphate aldolase (yihT), found in Salmonella typhimurium (strain LT2 / SGSC1412 / ATCC 700720).